The primary structure comprises 72 residues: Guanine nucleotide-binding protein G(I)/G(S)/G(O) subunit gamma-12 (72 aa).

An N-acetylserine modification is found at Ser2. Phosphoserine is present on residues Ser10 and Ser26. Tyr42 is subject to Phosphotyrosine. A Phosphoserine modification is found at Ser49. The residue at position 69 (Cys69) is a Cysteine methyl ester. Residue Cys69 is the site of S-geranylgeranyl cysteine attachment. Positions 70–72 (IIL) are cleaved as a propeptide — removed in mature form.

The protein belongs to the G protein gamma family. G proteins are composed of 3 units, alpha, beta and gamma.

The protein localises to the cell membrane. In terms of biological role, guanine nucleotide-binding proteins (G proteins) are involved as a modulator or transducer in various transmembrane signaling systems. The beta and gamma chains are required for the GTPase activity, for replacement of GDP by GTP, and for G protein-effector interaction. In Mus musculus (Mouse), this protein is Guanine nucleotide-binding protein G(I)/G(S)/G(O) subunit gamma-12 (Gng12).